Consider the following 221-residue polypeptide: Ribonuclease T (221 aa).

Positions 20–194 constitute an Exonuclease domain; the sequence is VVIDIETAGF…YDTLQTANLF (175 aa). Mg(2+) contacts are provided by D23, E25, H181, and D186. H181 (proton donor/acceptor) is an active-site residue.

The protein belongs to the RNase T family. As to quaternary structure, homodimer. Mg(2+) serves as cofactor.

Its function is as follows. Trims short 3' overhangs of a variety of RNA species, leaving a one or two nucleotide 3' overhang. Responsible for the end-turnover of tRNA: specifically removes the terminal AMP residue from uncharged tRNA (tRNA-C-C-A). Also appears to be involved in tRNA biosynthesis. This chain is Ribonuclease T, found in Buchnera aphidicola subsp. Acyrthosiphon pisum (strain APS) (Acyrthosiphon pisum symbiotic bacterium).